A 547-amino-acid polypeptide reads, in one-letter code: Chaperonin GroEL (547 aa).

Residues 30–33 (TLGP), Lys-51, 87–91 (DGTTT), Gly-415, 479–481 (NAA), and Asp-495 contribute to the ATP site.

It belongs to the chaperonin (HSP60) family. As to quaternary structure, forms a cylinder of 14 subunits composed of two heptameric rings stacked back-to-back. Interacts with the co-chaperonin GroES.

Its subcellular location is the cytoplasm. The catalysed reaction is ATP + H2O + a folded polypeptide = ADP + phosphate + an unfolded polypeptide.. Functionally, together with its co-chaperonin GroES, plays an essential role in assisting protein folding. The GroEL-GroES system forms a nano-cage that allows encapsulation of the non-native substrate proteins and provides a physical environment optimized to promote and accelerate protein folding. The chain is Chaperonin GroEL from Enterobacter sp. (strain 638).